Reading from the N-terminus, the 378-residue chain is Flap endonuclease 1 (378 aa).

An N-domain region spans residues 1–102; that stretch reads MGIHGLAKLI…GELAKRSERR (102 aa). R19 is modified (symmetric dimethylarginine; by PRMT5). Position 34 (D34) interacts with Mg(2+). The DNA site is built by R47 and R69. K78 is subject to N6-acetyllysine. Position 84 (D84) interacts with Mg(2+). Symmetric dimethylarginine; by PRMT5 occurs at positions 98 and 102. The interval 120–251 is I-domain; it reads EVEKFTKRLV…KRAVDLIQKH (132 aa). Mg(2+) is bound by residues E156, E158, D177, and D179. Position 156 (E156) interacts with DNA. A Phosphoserine; by CDK2 modification is found at S185. Symmetric dimethylarginine; by PRMT5 is present on R190. At S195 the chain carries Phosphoserine. Positions 229 and 231 each coordinate DNA. D231 contributes to the Mg(2+) binding site. A phosphoserine mark is found at S253, S291, and S333. The tract at residues 325-378 is disordered; sequence RLSKSRQGSTQGRLDDFFKVTGSLSSAKRKEPEPKGPAKKKAKTGGAGKFRRGK. T334 bears the Phosphothreonine mark. Residues 334 to 342 form an interaction with PCNA region; the sequence is TQGRLDDFF. N6-acetyllysine is present on residues K352, K373, and K378. The segment covering 361–378 has biased composition (basic residues); that stretch reads PAKKKAKTGGAGKFRRGK.

Belongs to the XPG/RAD2 endonuclease family. FEN1 subfamily. As to quaternary structure, interacts with PCNA. Three molecules of FEN1 bind to one PCNA trimer with each molecule binding to one PCNA monomer. PCNA stimulates the nuclease activity without altering cleavage specificity. The C-terminal domain binds EP300; can bind simultaneously to both PCNA and EP300. Interacts with DDX11; this interaction is direct and increases flap endonuclease activity of FEN1. Interacts with WDR4; regulating its endonuclease activity. Interacts with POLB. Mg(2+) serves as cofactor. Post-translationally, acetylated by EP300. Acetylation inhibits both endonuclease and exonuclease activity. Acetylation also reduces DNA-binding activity but does not affect interaction with PCNA or EP300. Phosphorylation upon DNA damage induces relocalization to the nuclear plasma. Phosphorylation at Ser-185 by CDK2 occurs during late S-phase and results in dissociation from PCNA. In terms of processing, methylation at Arg-190 by PRMT5 impedes Ser-185 phosphorylation and increases interaction with PCNA.

It localises to the nucleus. The protein resides in the nucleolus. Its subcellular location is the nucleoplasm. The protein localises to the mitochondrion. Structure-specific nuclease with 5'-flap endonuclease and 5'-3' exonuclease activities involved in DNA replication and repair. During DNA replication, cleaves the 5'-overhanging flap structure that is generated by displacement synthesis when DNA polymerase encounters the 5'-end of a downstream Okazaki fragment. It enters the flap from the 5'-end and then tracks to cleave the flap base, leaving a nick for ligation. Also involved in the long patch base excision repair (LP-BER) pathway, by cleaving within the apurinic/apyrimidinic (AP) site-terminated flap. Acts as a genome stabilization factor that prevents flaps from equilibrating into structures that lead to duplications and deletions. Also possesses 5'-3' exonuclease activity on nicked or gapped double-stranded DNA, and exhibits RNase H activity. Also involved in replication and repair of rDNA and in repairing mitochondrial DNA. This is Flap endonuclease 1 from Mus musculus (Mouse).